The primary structure comprises 208 residues: Ribosome maturation factor RimP (208 aa).

A disordered region spans residues 175–208 (GEDVEDLVADPGADDELDELDELDELDDGDEDEQ). A compositionally biased stretch (acidic residues) spans 177–208 (DVEDLVADPGADDELDELDELDELDDGDEDEQ).

It belongs to the RimP family.

Its subcellular location is the cytoplasm. In terms of biological role, required for maturation of 30S ribosomal subunits. This is Ribosome maturation factor RimP from Kineococcus radiotolerans (strain ATCC BAA-149 / DSM 14245 / SRS30216).